A 371-amino-acid polypeptide reads, in one-letter code: uncharacterized protein (371 aa).

7 consecutive transmembrane segments (helical) span residues 9–29 (FTLD…VFLI), 58–78 (VLAF…FLAI), 98–118 (LIVA…SFIF), 133–153 (LAPF…VSVI), 159–179 (YDVN…ALAA), 183–203 (ISNF…IGDW), and 330–350 (IIEI…MVVV).

The protein belongs to the MscS (TC 1.A.23) family.

It localises to the cell membrane. In terms of biological role, may play a role in resistance to osmotic downshock. This is an uncharacterized protein from Bacillus subtilis (strain 168).